Consider the following 552-residue polypeptide: Threonylcarbamoyladenosine tRNA methylthiotransferase (552 aa).

Residues 31 to 61 (YENKKTVTVRAKKRSQIRLESQEEEEKPKPT) are disordered. The MTTase N-terminal domain maps to 71–178 (QKVFVKTWGC…VVEVVEETLK (108 aa)). Residues Cys80, Cys115, Cys144, Cys221, Cys225, and Cys228 each contribute to the [4Fe-4S] cluster site. The 232-residue stretch at 207 to 438 (RKNPLIEIIS…DLFYSYEPYA (232 aa)) folds into the Radical SAM core domain. The TRAM domain occupies 438 to 500 (ADRVGEIYTV…KFSMVGEILD (63 aa)). Residues 532 to 552 (FGIALVLGSLAFLIQLVVRLL) form a helical membrane-spanning segment.

It belongs to the methylthiotransferase family. CDKAL1 subfamily. [4Fe-4S] cluster is required as a cofactor.

It is found in the membrane. It carries out the reaction N(6)-L-threonylcarbamoyladenosine(37) in tRNA + (sulfur carrier)-SH + AH2 + 2 S-adenosyl-L-methionine = 2-methylsulfanyl-N(6)-L-threonylcarbamoyladenosine(37) in tRNA + (sulfur carrier)-H + 5'-deoxyadenosine + L-methionine + A + S-adenosyl-L-homocysteine + 2 H(+). In terms of biological role, catalyzes the methylthiolation of N6-threonylcarbamoyladenosine (t(6)A), leading to the formation of 2-methylthio-N6-threonylcarbamoyladenosine (ms(2)t(6)A) at position 37 in tRNAs that read codons beginning with adenine. The chain is Threonylcarbamoyladenosine tRNA methylthiotransferase from Drosophila melanogaster (Fruit fly).